Here is a 151-residue protein sequence, read N- to C-terminus: UPAR/Ly6 domain-containing protein crok (151 aa).

The first 23 residues, 1 to 23 (MKTLEKYILFAIVLCCLLQLGQA), serve as a signal peptide directing secretion. Residues 24 to 128 (IKCWDCRSDN…KDGCNSAGIH (105 aa)) lie on the Lumenal side of the membrane. 5 disulfide bridges follow: C26–C68, C29–C37, C51–C85, C100–C114, and C116–C122. N-linked (GlcNAc...) asparagine glycosylation occurs at N43. The GPI-anchor amidated serine moiety is linked to residue S124. A propeptide spans 125-151 (AGIHRLGLMGVLTGTLLSVIVAHLLRQ) (removed in mature form). The helical transmembrane segment at 129-149 (RLGLMGVLTGTLLSVIVAHLL) threads the bilayer. The Cytoplasmic segment spans residues 150–151 (RQ).

It belongs to the quiver family.

The protein localises to the vesicle. It localises to the membrane. Its subcellular location is the endomembrane system. Required for septate junction assembly, possibly by organizing the preassembly and transport of septate junction proteins including dlg1/disks large 1 and Nrx-IV/Neurexin-IV. Involved in paracellular barrier functions of trachea, hindgut and salivary gland mediated by epithelial cell septate junctions. This chain is UPAR/Ly6 domain-containing protein crok, found in Drosophila melanogaster (Fruit fly).